A 97-amino-acid polypeptide reads, in one-letter code: MRSCTSFSDEPMTGWMAAAVVTLMIRMCFSVYTMLSESCQRMVIVGYGRCFADRQNLMVCLRSMPNVFTGSCARMRCCLSENLLYRHRNGHIQAEWP.

This chain is Insertion element IS2 uncharacterized 11.1 kDa protein, found in Escherichia coli.